The sequence spans 452 residues: Protoheme IX farnesyltransferase, mitochondrial (452 aa).

Residues 1–27 constitute a mitochondrion transit peptide; that stretch reads MSLVIQPLLMRALNPNLSSILISGRGF. Helical transmembrane passes span 152–172, 235–255, 267–287, 291–311, 341–361, 364–386, and 417–437; these read VLVM…ATVL, ILWL…IALY, IINT…GWAA, LSHP…FPHF, VALR…YFNV, WYYQ…KFYF, and TFWV…LHKK.

This sequence belongs to the UbiA prenyltransferase family.

It is found in the mitochondrion membrane. Converts protoheme IX and farnesyl diphosphate to heme O. This Kluyveromyces lactis (strain ATCC 8585 / CBS 2359 / DSM 70799 / NBRC 1267 / NRRL Y-1140 / WM37) (Yeast) protein is Protoheme IX farnesyltransferase, mitochondrial (COX10).